The following is a 634-amino-acid chain: Glutathione S-transferase C-terminal domain-containing protein (634 aa).

The GST C-terminal domain occupies 131–333 (LGFKKTCLKA…QEVPKVKTAA (203 aa)). A disordered region spans residues 189–233 (RVHNDDKLRRQKLKQQKAAGSEPPSGKGKAKSKASAQKTPKDLAA). The span at 204 to 226 (QKAAGSEPPSGKGKAKSKASAQK) shows a compositional bias: low complexity.

Belongs to the GSTCD family.

It is found in the cytoplasm. The chain is Glutathione S-transferase C-terminal domain-containing protein (Gstcd) from Mus musculus (Mouse).